The following is a 1089-amino-acid chain: Pentatricopeptide repeat-containing protein MRL1, chloroplastic (1089 aa).

A chloroplast-targeting transit peptide spans 1 to 72; that stretch reads MEVTSTTFIS…SIRSPRLVVR (72 aa). PPR repeat units follow at residues 466–500, 501–535, 536–570, 571–605, 608–642, 643–677, 678–712, 713–747, 748–782, and 783–817; these read TMSTFNMLMSVCASSQDIEGARGVLRLVQESGMTA, DCKLYTTLISSCAKSGKVDAMFEVFHQMSNSGVEA, NLHTFGALIDGCARAGQVAKAFGAYGILRSKNVKP, DRVVFNALISACGQSGAVDRAFDVLAEMKAETHPI, DHISIGALMKACCNAGQVERAKEVYQMIHKYGIRG, TPEVYTIAVNSCSKSGDWDFACSIYKDMKEKDVTP, DEVFFSALIDVAGHAKMLDEAFGILQDAKSQGIRL, GTISYSSLMGACCNAKDWKKALELYEKIKSIKLRP, TISTMNALITALCEGNQLPKAMEYLDEIKTLGLKP, and NTITYSMLMLASERKDDFEVSFKLLSQAKGDGVSP.

Belongs to the PPR family. P subfamily. Expressed in stems, leaves and sepals.

Its subcellular location is the plastid. It is found in the chloroplast. In terms of biological role, regulator of the large subunit (LS) of RuBisCO. Involved either in the processing or in the stabilization of the processed transcript, probably by acting as a barrier to the 5'&gt;3' degradation. In Arabidopsis thaliana (Mouse-ear cress), this protein is Pentatricopeptide repeat-containing protein MRL1, chloroplastic (MRL1).